We begin with the raw amino-acid sequence, 412 residues long: DNA primase DnaG (412 aa).

Residues 165 to 243 form the Toprim domain; it reads PELIIVEGRA…KLDYVARAPT (79 aa). Mg(2+)-binding residues include Glu171, Asp216, and Asp218.

The protein belongs to the archaeal DnaG primase family. Forms a ternary complex with MCM helicase and DNA. Component of the archaeal exosome complex. The cofactor is Mg(2+).

The enzyme catalyses ssDNA + n NTP = ssDNA/pppN(pN)n-1 hybrid + (n-1) diphosphate.. RNA polymerase that catalyzes the synthesis of short RNA molecules used as primers for DNA polymerase during DNA replication. Also part of the exosome, which is a complex involved in RNA degradation. Acts as a poly(A)-binding protein that enhances the interaction between heteromeric, adenine-rich transcripts and the exosome. The chain is DNA primase DnaG from Sulfolobus acidocaldarius (strain ATCC 33909 / DSM 639 / JCM 8929 / NBRC 15157 / NCIMB 11770).